The following is a 983-amino-acid chain: Ephrin type-A receptor 3 (983 aa).

The signal sequence occupies residues 1-19 (MDRRRLPLLLLCAALGSAG). Residues 20–540 (RLSARPGNEV…SFSISSENSQ (521 aa)) lie on the Extracellular side of the membrane. The Eph LBD domain maps to 28-206 (EVNLLDSKTI…YFKKCPFTVK (179 aa)). N-linked (GlcNAc...) asparagine glycosylation is found at asparagine 231, asparagine 336, asparagine 390, asparagine 403, and asparagine 492. Fibronectin type-III domains lie at 324–434 (PPSA…TNQA) and 435–530 (APSP…TSPD). The chain crosses the membrane as a helical span at residues 541–564 (VVMIAISAAVAIILLTVVVYVLIG). Topologically, residues 565–983 (RFCGYKKSKH…THTKNSPVPV (419 aa)) are cytoplasmic. 2 positions are modified to phosphotyrosine; by autocatalysis: tyrosine 596 and tyrosine 602. The Protein kinase domain occupies 621–882 (ISIDKVVGAG…QIVSILDKLI (262 aa)). Residues 628–633 (GAGEFG), lysine 653, and 700–706 (EYMENGS) each bind ATP. Tyrosine 701 carries the phosphotyrosine; by autocatalysis modification. The active-site Proton acceptor is aspartate 746. 750-751 (RN) provides a ligand contact to ATP. Tyrosine 779 carries the post-translational modification Phosphotyrosine; by autocatalysis. The region spanning 911–975 (SAFRTAGDWL…VSSIKTLETH (65 aa)) is the SAM domain. The PDZ-binding signature appears at 981–983 (VPV).

It belongs to the protein kinase superfamily. Tyr protein kinase family. Ephrin receptor subfamily. As to quaternary structure, heterotetramer upon binding of the ligand. The heterotetramer is composed of an ephrin dimer and a receptor dimer. Oligomerization is probably required to induce biological responses. Autophosphorylates upon activation by EFNA5. In terms of tissue distribution, highly expressed in the developing brain and embryonic tissues. In adult, the greatest levels of expression occur in the brain. It is expressed in a graded manner across the retina with the highest expression at its temporal pole. Detectable in all other adult tissues examined, except the liver.

It is found in the cell membrane. The enzyme catalyses L-tyrosyl-[protein] + ATP = O-phospho-L-tyrosyl-[protein] + ADP + H(+). In terms of biological role, receptor tyrosine kinase which binds promiscuously membrane-bound ephrin family ligands residing on adjacent cells, leading to contact-dependent bidirectional signaling into neighboring cells. The signaling pathway downstream of the receptor is referred to as forward signaling while the signaling pathway downstream of the ephrin ligand is referred to as reverse signaling. Highly promiscuous for ephrin-A ligands it binds preferentially EFNA5. Upon activation by EFNA5 regulates cell-cell adhesion, cytoskeletal organization and cell migration. Plays a role in cardiac cells migration and differentiation probably through activation by EFNA1. Involved in the retinotectal mapping of neurons. May also control the segregation but not the guidance of motor and sensory axons during neuromuscular circuit development. This is Ephrin type-A receptor 3 (EPHA3) from Gallus gallus (Chicken).